The sequence spans 206 residues: Large ribosomal subunit protein uL4 (206 aa).

Positions 47 to 76 (GTQSAKTRAEVSGGGIKPWRQKGTGRARQG) are disordered.

It belongs to the universal ribosomal protein uL4 family. As to quaternary structure, part of the 50S ribosomal subunit.

Its function is as follows. One of the primary rRNA binding proteins, this protein initially binds near the 5'-end of the 23S rRNA. It is important during the early stages of 50S assembly. It makes multiple contacts with different domains of the 23S rRNA in the assembled 50S subunit and ribosome. Functionally, forms part of the polypeptide exit tunnel. The sequence is that of Large ribosomal subunit protein uL4 from Clostridium botulinum (strain Okra / Type B1).